The sequence spans 253 residues: Probable transcriptional regulatory protein Mlut_12910 (253 aa).

Belongs to the TACO1 family.

The protein resides in the cytoplasm. This is Probable transcriptional regulatory protein Mlut_12910 from Micrococcus luteus (strain ATCC 4698 / DSM 20030 / JCM 1464 / CCM 169 / CCUG 5858 / IAM 1056 / NBRC 3333 / NCIMB 9278 / NCTC 2665 / VKM Ac-2230) (Micrococcus lysodeikticus).